We begin with the raw amino-acid sequence, 140 residues long: MLMPKKVKYRKQMKGRMSGTPQRGVSLAFGEFGLQATECGWLDSRQIEAARIAMNRYIKRGGKIWIRIFPDKPLTAKPAETRMGKGKGSPDSWVCVIKPGRILYEMEGVTEEIAREAFRLAAHKLPIPTKFTSRKDAHEG.

This sequence belongs to the universal ribosomal protein uL16 family. As to quaternary structure, part of the 50S ribosomal subunit.

Functionally, binds 23S rRNA and is also seen to make contacts with the A and possibly P site tRNAs. The sequence is that of Large ribosomal subunit protein uL16 from Geotalea uraniireducens (strain Rf4) (Geobacter uraniireducens).